Reading from the N-terminus, the 491-residue chain is Cobyric acid synthase (491 aa).

Positions 250–439 constitute a GATase cobBQ-type domain; sequence EVTIAVIRLP…LHGIFDNGAW (190 aa). Cys-331 acts as the Nucleophile in catalysis. The active site involves His-431.

The protein belongs to the CobB/CobQ family. CobQ subfamily.

It participates in cofactor biosynthesis; adenosylcobalamin biosynthesis. In terms of biological role, catalyzes amidations at positions B, D, E, and G on adenosylcobyrinic A,C-diamide. NH(2) groups are provided by glutamine, and one molecule of ATP is hydrogenolyzed for each amidation. This chain is Cobyric acid synthase, found in Synechococcus elongatus (strain ATCC 33912 / PCC 7942 / FACHB-805) (Anacystis nidulans R2).